The following is a 231-amino-acid chain: Urease accessory protein UreF (231 aa).

This sequence belongs to the UreF family. In terms of assembly, ureD, UreF and UreG form a complex that acts as a GTP-hydrolysis-dependent molecular chaperone, activating the urease apoprotein by helping to assemble the nickel containing metallocenter of UreC. The UreE protein probably delivers the nickel.

The protein localises to the cytoplasm. In terms of biological role, required for maturation of urease via the functional incorporation of the urease nickel metallocenter. This Magnetococcus marinus (strain ATCC BAA-1437 / JCM 17883 / MC-1) protein is Urease accessory protein UreF.